Consider the following 840-residue polypeptide: Protein argonaute-2 (840 aa).

Residues 210-329 form the PAZ domain; the sequence is PVIEFVCEVL…LPLEVCNIVA (120 aa). Serine 368 is modified (phosphoserine). One can recognise a Piwi domain in the interval 498 to 799; that stretch reads LVVVILPGKT…VAFRARYHLV (302 aa). A divalent metal cation contacts are provided by aspartate 578 and aspartate 650. The residue at position 681 (proline 681) is a 4-hydroxyproline. Position 788 (histidine 788) interacts with a divalent metal cation. Serine 805, serine 809, serine 812, and serine 815 each carry phosphoserine.

This sequence belongs to the argonaute family. Ago subfamily. In terms of assembly, interacts with DICER1 through its Piwi domain and with TARBP2 during assembly of the RNA-induced silencing complex (RISC). Together, DICER1, AGO2 and TARBP2 constitute the trimeric RISC loading complex (RLC), or micro-RNA (miRNA) loading complex (miRLC). Within the RLC/miRLC, DICER1 and TARBP2 are required to process precursor miRNAs (pre-miRNAs) to mature miRNAs and then load them onto AGO2. AGO2 bound to the mature miRNA constitutes the minimal RISC and may subsequently dissociate from DICER1 and TARBP2. Note however that the term RISC has also been used to describe the trimeric RLC/miRLC. The formation of RISC complexes containing siRNAs rather than miRNAs appears to occur independently of DICER1. Interacts with AGO1. Also interacts with DDB1, DDX5, DDX6, DDX20, DHX30, DHX36, DDX47, DHX9, ELAVL, FXR1, GEMIN4, HNRNPF, IGF2BP1, ILF3, IMP8, MATR3, PABPC1, PRMT5, P4HA1, P4HB, RBM4, SART3, TNRC6A, TNRC6B, UPF1 and YBX1. Interacts with the P-body components DCP1A and XRN1. Associates with polysomes and messenger ribonucleoproteins (mNRPs). Interacts with RBM4; the interaction is modulated under stress-induced conditions, occurs under both cell proliferation and differentiation conditions and in an RNA- and phosphorylation-independent manner. Interacts with LIMD1, WTIP and AJUBA. Interacts with TRIM71; the interaction increases in presence of RNA. Interacts with APOBEC3G in an RNA-dependent manner. Interacts with APOBEC3A, APOBEC3C, APOBEC3F and APOBEC3H. Interacts with DICER1, TARBP2, EIF6, MOV10 and RPL7A (60S ribosome subunit); they form a large RNA-induced silencing complex (RISC). Interacts with FMR1. Interacts with ZFP36. Interacts with RC3H1; the interaction is RNA independent. Found in a complex composed of AGO2, CHD7 and ARB2A. Interacts with SND1 and SYT11. Interacts with CLNK. Interacts with GARRE1. Hydroxylated. 4-hydroxylation appears to enhance protein stability but is not required for miRNA-binding or endonuclease activity. In terms of processing, ubiquitinated on surface-exposed lysines by a SCF-like E3 ubiquitin-protein ligase complex containing ZSWIM8 during target-directed microRNA degradation (TDMD), a process that mediates degradation of microRNAs (miRNAs). Ubiquitination by the SCF-like E3 ubiquitin-protein ligase complex containing ZSWIM8 leads to its subsequent degradation, thereby exposing miRNAs for degradation. ZSWIM8 recognizes and binds AGO2 when it is engaged with a TDMD target. Post-translationally, phosphorylation at Ser-368 by AKT3; leads to up-regulate translational repression of microRNA target and down-regulate endonucleolytic cleavage. A phosphorylation cycle of C-terminal serine cluster (Ser-805-Ser-815) regulates the release of target mRNAs. Target-binding leads to phosphorylation of these residues by CSNK1A1, which reduces the affinity of AGO2 for mRNA and enables target release. The ANKRD52-PPP6C phosphatase complex dephosphorylates the residues, which primes AGO2 for binding a new target.

The protein localises to the cytoplasm. It localises to the P-body. The protein resides in the nucleus. It catalyses the reaction Endonucleolytic cleavage to 5'-phosphomonoester.. Functionally, required for RNA-mediated gene silencing (RNAi) by the RNA-induced silencing complex (RISC). The 'minimal RISC' appears to include AGO2 bound to a short guide RNA such as a microRNA (miRNA) or short interfering RNA (siRNA). These guide RNAs direct RISC to complementary mRNAs that are targets for RISC-mediated gene silencing. The precise mechanism of gene silencing depends on the degree of complementarity between the miRNA or siRNA and its target. Binding of RISC to a perfectly complementary mRNA generally results in silencing due to endonucleolytic cleavage of the mRNA specifically by AGO2. Binding of RISC to a partially complementary mRNA results in silencing through inhibition of translation, and this is independent of endonuclease activity. May inhibit translation initiation by binding to the 7-methylguanosine cap, thereby preventing the recruitment of the translation initiation factor eIF4-E. May also inhibit translation initiation via interaction with EIF6, which itself binds to the 60S ribosomal subunit and prevents its association with the 40S ribosomal subunit. The inhibition of translational initiation leads to the accumulation of the affected mRNA in cytoplasmic processing bodies (P-bodies), where mRNA degradation may subsequently occur. In some cases RISC-mediated translational repression is also observed for miRNAs that perfectly match the 3' untranslated region (3'-UTR). Can also up-regulate the translation of specific mRNAs under certain growth conditions. Binds to the AU element of the 3'-UTR of the TNF (TNF-alpha) mRNA and up-regulates translation under conditions of serum starvation. Also required for transcriptional gene silencing (TGS), in which short RNAs known as antigene RNAs or agRNAs direct the transcriptional repression of complementary promoter regions. The chain is Protein argonaute-2 (AGO2) from Oryctolagus cuniculus (Rabbit).